Here is a 96-residue protein sequence, read N- to C-terminus: Integration host factor subunit alpha (96 aa).

This sequence belongs to the bacterial histone-like protein family. In terms of assembly, heterodimer of an alpha and a beta chain.

In terms of biological role, this protein is one of the two subunits of integration host factor, a specific DNA-binding protein that functions in genetic recombination as well as in transcriptional and translational control. This chain is Integration host factor subunit alpha, found in Haemophilus influenzae (strain 86-028NP).